Consider the following 589-residue polypeptide: RNA-directed RNA polymerase subunit beta (589 aa).

The region spanning arginine 259–glycine 391 is the RdRp catalytic domain. Positions 274, 359, and 360 each coordinate Mg(2+).

In terms of assembly, homodimer; the replicase complex can dimerize. Part of the viral RNA-dependent RNA polymerase complex, the other subunits are the host ribosomal protein S1, EF-Tu and EF-Ts. S1 is needed for the initiation of genomic RNA (+)-strand replication. The cofactor is Mg(2+).

It catalyses the reaction RNA(n) + a ribonucleoside 5'-triphosphate = RNA(n+1) + diphosphate. This is the catalytic subunit of the viral RNA-dependent RNA polymerase complex. This complex is involved in viral RNA replication that produces (+)-stranded genomes via a complementary, (-)-stranded intermediate. Binds RNA cooperatively with the host ribosomal protein S1. The chain is RNA-directed RNA polymerase subunit beta from Escherichia coli (Bacteriophage Q-beta).